Consider the following 141-residue polypeptide: Large ribosomal subunit protein uL11 (141 aa).

This sequence belongs to the universal ribosomal protein uL11 family. Part of the ribosomal stalk of the 50S ribosomal subunit. Interacts with L10 and the large rRNA to form the base of the stalk. L10 forms an elongated spine to which 2 L12 dimers bind in a sequential fashion forming a pentameric L10(L12)2(L12)2 complex. In stalled/isolated 50S subunits interacts with RqcH. One or more lysine residues are methylated.

In terms of biological role, forms part of the ribosomal stalk which helps the ribosome interact with GTP-bound translation factors. Required to recruit RqcH, which is part of the ribosome quality control system (RQC), to stalled 50S ribosomal subunits. In Bacillus subtilis (strain 168), this protein is Large ribosomal subunit protein uL11.